The chain runs to 134 residues: Transcription antitermination protein NusB (134 aa).

Belongs to the NusB family.

In terms of biological role, involved in transcription antitermination. Required for transcription of ribosomal RNA (rRNA) genes. Binds specifically to the boxA antiterminator sequence of the ribosomal RNA (rrn) operons. This is Transcription antitermination protein NusB from Shewanella loihica (strain ATCC BAA-1088 / PV-4).